Reading from the N-terminus, the 692-residue chain is Elongation factor G 2 (692 aa).

Residues 8 to 283 enclose the tr-type G domain; it reads KDVRNIGIMA…GVVNYLPSPL (276 aa). GTP is bound by residues 17-24, 81-85, and 135-138; these read AHIDAGKT, DTPGH, and NKMD.

The protein belongs to the TRAFAC class translation factor GTPase superfamily. Classic translation factor GTPase family. EF-G/EF-2 subfamily.

Its subcellular location is the cytoplasm. Catalyzes the GTP-dependent ribosomal translocation step during translation elongation. During this step, the ribosome changes from the pre-translocational (PRE) to the post-translocational (POST) state as the newly formed A-site-bound peptidyl-tRNA and P-site-bound deacylated tRNA move to the P and E sites, respectively. Catalyzes the coordinated movement of the two tRNA molecules, the mRNA and conformational changes in the ribosome. This chain is Elongation factor G 2, found in Desulfotalea psychrophila (strain LSv54 / DSM 12343).